Here is a 677-residue protein sequence, read N- to C-terminus: uncharacterized protein (677 aa).

The next 3 membrane-spanning stretches (helical) occupy residues 80–102 (ILSL…RASF), 338–360 (ALLS…LFGF), and 367–386 (LVAM…LLSL). The tract at residues 523-556 (DEAASLPSDSSPEEDLDPLEEVESIEGTAEESTR) is disordered. Acidic residues predominate over residues 533 to 546 (SPEEDLDPLEEVES).

The protein localises to the cell membrane. This is an uncharacterized protein from Treponema pallidum (strain Nichols).